We begin with the raw amino-acid sequence, 315 residues long: Kinetochore protein SPC25 homolog (315 aa).

Position 1 is an N-acetylmethionine (methionine 1). A coiled-coil region spans residues 57 to 91 (TAQSQVELMNLKADLREAEDELVKVLAVKTRKEAR). The tract at residues 261–315 (APAISFSTDTNMSTPENKRSKVQVNRRQKRGSESPLLAPVSTSATRRSSRFKGKK) is disordered. Polar residues predominate over residues 266-275 (FSTDTNMSTP). The span at 280–289 (SKVQVNRRQK) shows a compositional bias: basic residues.

It belongs to the SPC25 family. As to quaternary structure, component of the NDC80 complex, which consists of NDC80, NUF2, SPC24 and SPC25.

The protein localises to the chromosome. It localises to the centromere. Acts as a component of the essential kinetochore-associated NDC80 complex, which is required for chromosome segregation and spindle checkpoint activity to ensure proper cell division. This Arabidopsis thaliana (Mouse-ear cress) protein is Kinetochore protein SPC25 homolog.